The sequence spans 508 residues: Photosystem II CP47 reaction center protein (508 aa).

The next 6 helical transmembrane spans lie at 21-36 (SVHI…WAGS), 101-115 (IVFS…IWHW), 140-156 (GIHL…FGAF), 203-218 (IAAG…FHLS), 237-252 (VLSS…AFVV), and 457-472 (TFAL…HGAR).

The protein belongs to the PsbB/PsbC family. PsbB subfamily. As to quaternary structure, PSII is composed of 1 copy each of membrane proteins PsbA, PsbB, PsbC, PsbD, PsbE, PsbF, PsbH, PsbI, PsbJ, PsbK, PsbL, PsbM, PsbT, PsbX, PsbY, PsbZ, Psb30/Ycf12, at least 3 peripheral proteins of the oxygen-evolving complex and a large number of cofactors. It forms dimeric complexes. Binds multiple chlorophylls. PSII binds additional chlorophylls, carotenoids and specific lipids. serves as cofactor.

The protein localises to the plastid. The protein resides in the chloroplast thylakoid membrane. Its function is as follows. One of the components of the core complex of photosystem II (PSII). It binds chlorophyll and helps catalyze the primary light-induced photochemical processes of PSII. PSII is a light-driven water:plastoquinone oxidoreductase, using light energy to abstract electrons from H(2)O, generating O(2) and a proton gradient subsequently used for ATP formation. The polypeptide is Photosystem II CP47 reaction center protein (Oryza nivara (Indian wild rice)).